Here is a 325-residue protein sequence, read N- to C-terminus: Protease HtpX homolog (325 aa).

The chain crosses the membrane as a helical span at residues 20–40 (IGYLLGGGGGMMIALVIAVAM). A Zn(2+)-binding site is contributed by histidine 130. Glutamate 131 is an active-site residue. Histidine 134 serves as a coordination point for Zn(2+). The next 2 helical transmembrane spans lie at 145–165 (IVAT…FLGG) and 173–193 (VMGV…AMIV). Residue glutamate 202 coordinates Zn(2+). The interval 288–325 (AMTARAAAPSQNSGPWGQRSDNAGGNSNGGSRYRGPWS) is disordered. The span at 306-325 (RSDNAGGNSNGGSRYRGPWS) shows a compositional bias: low complexity.

It belongs to the peptidase M48B family. Zn(2+) is required as a cofactor.

The protein localises to the cell inner membrane. This Brucella abortus (strain S19) protein is Protease HtpX homolog.